The primary structure comprises 288 residues: Alpha/beta hydrolase domain-containing protein 17B (288 aa).

Catalysis depends on charge relay system residues Ser170, Asp235, and His264.

The protein belongs to the AB hydrolase superfamily. ABHD17 family. In terms of processing, palmitoylated on cysteine residues located in a cysteine cluster at the N-terminus which promotes membrane localization.

It localises to the cell membrane. Its subcellular location is the recycling endosome membrane. It is found in the cell projection. The protein resides in the dendritic spine. The protein localises to the postsynaptic density membrane. It carries out the reaction S-hexadecanoyl-L-cysteinyl-[protein] + H2O = L-cysteinyl-[protein] + hexadecanoate + H(+). In terms of biological role, hydrolyzes fatty acids from S-acylated cysteine residues in proteins. This is Alpha/beta hydrolase domain-containing protein 17B from Xenopus tropicalis (Western clawed frog).